A 428-amino-acid polypeptide reads, in one-letter code: Putative FBD-associated F-box protein At5g56390 (428 aa).

Residues Asp2–Ser50 form the F-box domain. In terms of domain architecture, FBD spans Cys344–Ser394.

The protein is Putative FBD-associated F-box protein At5g56390 of Arabidopsis thaliana (Mouse-ear cress).